We begin with the raw amino-acid sequence, 784 residues long: SWI/SNF complex subunit SWI3C homolog (784 aa).

The span at 1–10 (MPRKASSTSD) shows a compositional bias: polar residues. Positions 1-68 (MPRKASSTSD…PEDADDETLA (68 aa)) are disordered. The segment covering 24-39 (ASPSPSNRSSAAAAAA) has biased composition (low complexity). Acidic residues predominate over residues 43 to 66 (DDSDSAAVNEDDDSAVPEDADDET). Positions 185–284 (HVVPKHSDWF…YLASGSVHRG (100 aa)) constitute an SWIRM domain. The segment at 355-409 (LSESSCSYCLQPLTSLHYQSLKEADIALCSDCFHDARYITGHSSLDFQRIDGDND) adopts a ZZ-type; degenerate zinc-finger fold. The Zn(2+) site is built by cysteine 360, cysteine 363, cysteine 383, and cysteine 386. An SANT domain is found at 413 to 464 (NDGDSWTDQETLLLLEGIEKYNDNWNNIAEHVGTKSKAQCIYHFIRLPVEDG). Disordered regions lie at residues 667-702 (LASPGNSLPGGSTSTMSSNPMSMSPRPMGVPGSMPQ) and 760-784 (GMPNSVTPNHHQLLRSSSGNNSSVG). Residues 675 to 695 (PGGSTSTMSSNPMSMSPRPMG) are compositionally biased toward low complexity.

In terms of assembly, interacts with LFR. Interacts with NMCP1.

It is found in the nucleus. The protein resides in the nucleoplasm. Functionally, component of a multiprotein complex equivalent of the SWI/SNF complex, an ATP-dependent chromatin-remodeling complex, which is required for the positive and negative regulation of gene expression of a large number of genes. It changes chromatin structure by altering DNA-histone contacts within a nucleosome, leading eventually to a change in nucleosome position, thus facilitating or repressing binding of gene-specific transcription factors. May be involved in positive response to drought stress and modulation of root growth through its interaction with NMCP1. In Oryza sativa subsp. japonica (Rice), this protein is SWI/SNF complex subunit SWI3C homolog.